The primary structure comprises 224 residues: Urease accessory protein UreF (224 aa).

The protein belongs to the UreF family. In terms of assembly, ureD, UreF and UreG form a complex that acts as a GTP-hydrolysis-dependent molecular chaperone, activating the urease apoprotein by helping to assemble the nickel containing metallocenter of UreC. The UreE protein probably delivers the nickel.

The protein resides in the cytoplasm. Its function is as follows. Required for maturation of urease via the functional incorporation of the urease nickel metallocenter. The polypeptide is Urease accessory protein UreF (Nitrosococcus oceani (strain ATCC 19707 / BCRC 17464 / JCM 30415 / NCIMB 11848 / C-107)).